The primary structure comprises 130 residues: Large ribosomal subunit protein uL14 (130 aa).

The protein belongs to the universal ribosomal protein uL14 family. As to quaternary structure, part of the 50S ribosomal subunit. Forms a cluster with proteins L3 and L19. In the 70S ribosome, L14 and L19 interact and together make contacts with the 16S rRNA in bridges B5 and B8.

Binds to 23S rRNA. Forms part of two intersubunit bridges in the 70S ribosome. This chain is Large ribosomal subunit protein uL14, found in Leptospira interrogans serogroup Icterohaemorrhagiae serovar copenhageni (strain Fiocruz L1-130).